The following is a 144-amino-acid chain: NADH dehydrogenase [ubiquinone] 1 alpha subcomplex subunit 13 (144 aa).

N-acetylalanine is present on alanine 2. The helical transmembrane segment at 30–51 (LSGYSMLAIGIGTLIYGHWSIM) threads the bilayer. Residues 102–144 (PDWKVGESVFHTTRWVPPLIGELYGLRTTEEALHASHGFMWYT) form an important for inducing cell death region.

This sequence belongs to the complex I NDUFA13 subunit family. As to quaternary structure, complex I is composed of 45 different subunits. Interacts with CARD15, but not with CARD4. Interacts with STAT3, but not with STAT1, STAT2 and STAT5A. Interacts with OLFM4. (Microbial infection) Interacts with HHV-8 IRF1, in the nucleus, with HPV-16 E6 and SV40 LT. Widely expressed, with highest expression in heart, skeletal muscle, liver, kidney and placenta. In intestinal mucosa, down-regulated in areas involved in Crohn disease and ulcerative colitis.

The protein localises to the mitochondrion inner membrane. It is found in the nucleus. In terms of biological role, accessory subunit of the mitochondrial membrane respiratory chain NADH dehydrogenase (Complex I), that is believed not to be involved in catalysis. Complex I functions in the transfer of electrons from NADH to the respiratory chain. The immediate electron acceptor for the enzyme is believed to be ubiquinone. Involved in the interferon/all-trans-retinoic acid (IFN/RA) induced cell death. This apoptotic activity is inhibited by interaction with viral IRF1. Prevents the transactivation of STAT3 target genes. May play a role in CARD15-mediated innate mucosal responses and serve to regulate intestinal epithelial cell responses to microbes. The polypeptide is NADH dehydrogenase [ubiquinone] 1 alpha subcomplex subunit 13 (NDUFA13) (Homo sapiens (Human)).